Reading from the N-terminus, the 366-residue chain is Aldo-keto reductase AFTS1 (366 aa).

D75 contacts NADP(+). Catalysis depends on Y80, which acts as the Proton donor. Position 172 (H172) interacts with substrate. Residues 202 to 203, Q228, 257 to 267, and 329 to 337 each bind NADP(+); these read SS, GSLASGRLARP, and SSVERIDEA.

This sequence belongs to the aldo/keto reductase family.

The protein operates within mycotoxin biosynthesis. Functionally, aldo-keto reductase; part of the gene clusters that mediate the biosynthesis of the host-selective toxins (HSTs) AF-toxins responsible for Alternaria black spot of strawberry disease by the strawberry pathotype. AF-toxin I and III are valine derivatives of 2,3-dyhydroxy-isovaleric acid and 2-hydroxy-isovaleric acid respectively, while AF II is an isoleucine derivative of 2-hydroxy-valeric acid. These derivatives are bound to a 9,10-epoxy-8-hydroxy-9-methyl-decatrienoic acid (EDA) moiety. On cellular level, AF-toxins affect plasma membrane of susceptible cells and cause a sudden increase in loss of K(+) after a few minutes of toxin treatment. The aldo-keto reductase AFTS1 catalyzes the conversion of 2-keto-isovaleric acid (2-KIV) to 2-hydroxy-isovaleric acid (2-HIV) by reduction of its ketone to an alcohol. The acyl-CoA ligase AFT1, the hydrolase AFT2 and the enoyl-CoA hydratases AFT3 and AFT6, but also the polyketide synthase AFT9, the acyl-CoA dehydrogenase AFT10, the cytochrome P450 monooxygenase AFT11 and the oxidoreductase AFT12 are all involved in the biosynthesis of the AK-, AF- and ACT-toxin common EDA structural moiety. The exact function of each enzyme, and of additional enzymes identified within the AF-toxin clusters have still to be determined. In Alternaria alternata (Alternaria rot fungus), this protein is Aldo-keto reductase AFTS1.